The following is a 431-amino-acid chain: MQNIHFIGIGGIGISALARFLKEKGFKISGSDLKESKITKELEKEGVKVSIPHHKDNILNKDLVIYSAAIKEENPEFKYAKELGIKCLSRKEALPLILEDKRVFAVAGAHGKSTTSSILASLLDDASVIIGAILKEFGSNMIYKESQNLIFEADESDSSFLNSNPYLAIVTNAEAEHLDHYGNEVSKLHHAYAEFLDTAKIRVINAEDEFLKNYKNESIKLYPSKDIKNCTMCIENFKPFTSFELKDLGEFKIFGMGYHLALDASLAILAALNFLDIETIGARLKNYQGIKKRFDILHADENLVLIDDYGHHPTEIKATLSAAQEYAKLGGYKKITAIFEPHRYTRLAVNLKEFAKAFEGVDELVILPVYAAGEEPIEIDLKAVFPKALFVENIQREGKFLVASKGQVFEEGLIIGFGAGDISNKLRQKNE.

An ATP-binding site is contributed by 108 to 114 (GAHGKST).

This sequence belongs to the MurCDEF family.

The protein localises to the cytoplasm. It catalyses the reaction UDP-N-acetyl-alpha-D-muramate + L-alanine + ATP = UDP-N-acetyl-alpha-D-muramoyl-L-alanine + ADP + phosphate + H(+). Its pathway is cell wall biogenesis; peptidoglycan biosynthesis. In terms of biological role, cell wall formation. This chain is UDP-N-acetylmuramate--L-alanine ligase, found in Campylobacter jejuni subsp. doylei (strain ATCC BAA-1458 / RM4099 / 269.97).